The sequence spans 305 residues: Ankyrin repeat domain-containing protein 23 (305 aa).

Residues 41-72 (QEAVAREKLKLEEEKKKKLERFNSTRFNLDNL) are a coiled coil. Residues 83–92 (KKRLRHRVPP) show a composition bias toward basic residues. The disordered stretch occupies residues 83-104 (KKRLRHRVPPRKPEPLVKPQSQ). 4 ANK repeats span residues 143 to 172 (LHRT…TVDA), 176 to 205 (LDRT…RVNA), 209 to 238 (IGST…HLNA), and 242 to 271 (EGDT…ELGV). Positions 178 to 195 (RTPVFWACRGGHLVILKQ) are interaction with TTN.

Interacts with titin/TTN and MYPN. Mainly expressed in heart, skeletal muscle and brown adipose tissues.

The protein localises to the nucleus. Functionally, may be involved in the energy metabolism. Could be a molecular link between myofibrillar stretch-induced signaling pathways and muscle gene expression. This chain is Ankyrin repeat domain-containing protein 23 (ANKRD23), found in Homo sapiens (Human).